The sequence spans 303 residues: tRNA dimethylallyltransferase (303 aa).

Residue 16-23 (GPTASGKS) coordinates ATP. 18–23 (TASGKS) is a binding site for substrate. The tract at residues 41–44 (DSMQ) is interaction with substrate tRNA. A disordered region spans residues 141–161 (AEALHGELSARDPETAGRVRP). Residues 165-169 (QRIVR) are interaction with substrate tRNA.

Belongs to the IPP transferase family. As to quaternary structure, monomer. Requires Mg(2+) as cofactor.

The catalysed reaction is adenosine(37) in tRNA + dimethylallyl diphosphate = N(6)-dimethylallyladenosine(37) in tRNA + diphosphate. Functionally, catalyzes the transfer of a dimethylallyl group onto the adenine at position 37 in tRNAs that read codons beginning with uridine, leading to the formation of N6-(dimethylallyl)adenosine (i(6)A). The protein is tRNA dimethylallyltransferase of Rhizobium meliloti (strain 1021) (Ensifer meliloti).